The chain runs to 423 residues: CinA-like protein (423 aa).

It belongs to the CinA family.

This chain is CinA-like protein, found in Chlorobium chlorochromatii (strain CaD3).